The following is a 360-amino-acid chain: Phospho-N-acetylmuramoyl-pentapeptide-transferase (360 aa).

The next 10 membrane-spanning stretches (helical) occupy residues Val-27–Phe-47, Thr-71–Ala-91, Val-98–Leu-118, Leu-142–Met-162, Tyr-168–Ser-188, Gly-199–Thr-219, Ala-236–Phe-256, Val-263–Leu-283, Ile-288–Val-308, and Val-338–Lys-358.

It belongs to the glycosyltransferase 4 family. MraY subfamily. Mg(2+) serves as cofactor.

Its subcellular location is the cell inner membrane. The catalysed reaction is UDP-N-acetyl-alpha-D-muramoyl-L-alanyl-gamma-D-glutamyl-meso-2,6-diaminopimeloyl-D-alanyl-D-alanine + di-trans,octa-cis-undecaprenyl phosphate = di-trans,octa-cis-undecaprenyl diphospho-N-acetyl-alpha-D-muramoyl-L-alanyl-D-glutamyl-meso-2,6-diaminopimeloyl-D-alanyl-D-alanine + UMP. It participates in cell wall biogenesis; peptidoglycan biosynthesis. Its function is as follows. Catalyzes the initial step of the lipid cycle reactions in the biosynthesis of the cell wall peptidoglycan: transfers peptidoglycan precursor phospho-MurNAc-pentapeptide from UDP-MurNAc-pentapeptide onto the lipid carrier undecaprenyl phosphate, yielding undecaprenyl-pyrophosphoryl-MurNAc-pentapeptide, known as lipid I. The polypeptide is Phospho-N-acetylmuramoyl-pentapeptide-transferase (Psychromonas ingrahamii (strain DSM 17664 / CCUG 51855 / 37)).